A 152-amino-acid chain; its full sequence is Xanthine-guanine phosphoribosyltransferase (152 aa).

5-phospho-alpha-D-ribose 1-diphosphate is bound by residues 37-38 (RG), R69, and 88-96 (DDLVDTGGT). R69 lines the GMP pocket. D89 contributes to the Mg(2+) binding site. Positions 92 and 135 each coordinate guanine. D92 and I135 together coordinate xanthine. GMP is bound by residues 92–96 (DTGGT) and 134–135 (WI).

This sequence belongs to the purine/pyrimidine phosphoribosyltransferase family. XGPT subfamily. In terms of assembly, homotetramer. Mg(2+) serves as cofactor.

It is found in the cell inner membrane. The enzyme catalyses GMP + diphosphate = guanine + 5-phospho-alpha-D-ribose 1-diphosphate. It carries out the reaction XMP + diphosphate = xanthine + 5-phospho-alpha-D-ribose 1-diphosphate. The catalysed reaction is IMP + diphosphate = hypoxanthine + 5-phospho-alpha-D-ribose 1-diphosphate. The protein operates within purine metabolism; GMP biosynthesis via salvage pathway; GMP from guanine: step 1/1. It functions in the pathway purine metabolism; XMP biosynthesis via salvage pathway; XMP from xanthine: step 1/1. Its function is as follows. Purine salvage pathway enzyme that catalyzes the transfer of the ribosyl-5-phosphate group from 5-phospho-alpha-D-ribose 1-diphosphate (PRPP) to the N9 position of the 6-oxopurines guanine and xanthine to form the corresponding ribonucleotides GMP (guanosine 5'-monophosphate) and XMP (xanthosine 5'-monophosphate), with the release of PPi. To a lesser extent, also acts on hypoxanthine. The polypeptide is Xanthine-guanine phosphoribosyltransferase (Serratia proteamaculans (strain 568)).